Consider the following 714-residue polypeptide: Fatty acid oxidation complex subunit alpha (714 aa).

The tract at residues 1–190 (MEMASAFTLN…KLGLVDDVVP (190 aa)) is enoyl-CoA hydratase. Residues 306 to 714 (APLNSVGILG…FWKTTATDLQ (409 aa)) are 3-hydroxyacyl-CoA dehydrogenase.

In the N-terminal section; belongs to the enoyl-CoA hydratase/isomerase family. This sequence in the central section; belongs to the 3-hydroxyacyl-CoA dehydrogenase family. In terms of assembly, heterotetramer of two alpha chains (FadJ) and two beta chains (FadI).

It localises to the cytoplasm. The enzyme catalyses a (3S)-3-hydroxyacyl-CoA = a (2E)-enoyl-CoA + H2O. It catalyses the reaction a 4-saturated-(3S)-3-hydroxyacyl-CoA = a (3E)-enoyl-CoA + H2O. It carries out the reaction a (3S)-3-hydroxyacyl-CoA + NAD(+) = a 3-oxoacyl-CoA + NADH + H(+). The catalysed reaction is (3S)-3-hydroxybutanoyl-CoA = (3R)-3-hydroxybutanoyl-CoA. Its pathway is lipid metabolism; fatty acid beta-oxidation. Functionally, catalyzes the formation of a hydroxyacyl-CoA by addition of water on enoyl-CoA. Also exhibits 3-hydroxyacyl-CoA epimerase and 3-hydroxyacyl-CoA dehydrogenase activities. The sequence is that of Fatty acid oxidation complex subunit alpha from Escherichia coli (strain UTI89 / UPEC).